We begin with the raw amino-acid sequence, 334 residues long: Glyoxylate reductase (334 aa).

NADP(+)-binding positions include Leu-158–Ile-161, Ser-180–Thr-182, and Ile-239–Arg-241. Residues Arg-241 and Glu-270 contribute to the active site. Residue His-288 is the Proton donor of the active site. Residue His-288 to Gly-290 coordinates NADP(+).

Belongs to the D-isomer specific 2-hydroxyacid dehydrogenase family. GyaR subfamily. Homodimer.

It is found in the cytoplasm. It catalyses the reaction glycolate + NAD(+) = glyoxylate + NADH + H(+). This chain is Glyoxylate reductase (gyaR), found in Pyrococcus horikoshii (strain ATCC 700860 / DSM 12428 / JCM 9974 / NBRC 100139 / OT-3).